The sequence spans 415 residues: Plasminogen activator inhibitor 2, macrophage (415 aa).

N-linked (GlcNAc...) asparagine glycosylation is found at Asn-23, Asn-75, Asn-261, and Asn-339.

Belongs to the serpin family. Ov-serpin subfamily. As to quaternary structure, interacts with PSMB1. Post-translationally, the signal sequence is not cleaved.

Its subcellular location is the cytoplasm. The protein localises to the secreted. It is found in the extracellular space. Functionally, inhibits urokinase-type plasminogen activator. The monocyte derived PAI-2 is distinct from the endothelial cell-derived PAI-1. Not required for normal murine development or survival. This is Plasminogen activator inhibitor 2, macrophage (Serpinb2) from Mus musculus (Mouse).